Here is a 324-residue protein sequence, read N- to C-terminus: 7,8-didemethyl-8-hydroxy-5-deazariboflavin synthase (324 aa).

In terms of domain architecture, Radical SAM core spans 4–239 (VTYSKNVFIP…QEVAIQIPPN (236 aa)). [4Fe-4S] cluster is bound by residues Cys-18, Cys-22, and Cys-25.

It belongs to the radical SAM superfamily. CofG family. Consists of two subunits, CofG and CofH. Requires [4Fe-4S] cluster as cofactor.

It carries out the reaction 5-amino-5-(4-hydroxybenzyl)-6-(D-ribitylimino)-5,6-dihydrouracil + S-adenosyl-L-methionine = 7,8-didemethyl-8-hydroxy-5-deazariboflavin + 5'-deoxyadenosine + L-methionine + NH4(+) + H(+). It participates in cofactor biosynthesis; coenzyme F0 biosynthesis. Its function is as follows. Catalyzes the radical-mediated synthesis of 7,8-didemethyl-8-hydroxy-5-deazariboflavin from 5-amino-5-(4-hydroxybenzyl)-6-(D-ribitylimino)-5,6-dihydrouracil. This is 7,8-didemethyl-8-hydroxy-5-deazariboflavin synthase from Archaeoglobus fulgidus (strain ATCC 49558 / DSM 4304 / JCM 9628 / NBRC 100126 / VC-16).